We begin with the raw amino-acid sequence, 123 residues long: CD59 glycoprotein (123 aa).

The first 25 residues, 1-25, serve as a signal peptide directing secretion; sequence MGSKGGFILLWLLSILAVLCHLGHS. The 78-residue stretch at 26–103 folds into the UPAR/Ly6 domain; the sequence is LQCYNCINPA…LCNKSDATIS (78 aa). Disulfide bonds link C28–C51, C31–C38, C44–C65, C71–C89, and C90–C95. An N-linked (GlcNAc...) asparagine glycan is attached at N43. A lipid anchor (GPI-anchor amidated serine) is attached at S98. The propeptide at 99–123 is removed in mature form; it reads DATISSGKTALLVILLLVATWHFCL.

Interacts with T-cell surface antigen CD2. Post-translationally, N- and O-glycosylated. Expressed in all tissues tested (lung, testis liver, kidney, spleen, heart and skeletal muscle). Highest levels in lung and spleen, lowest levels in liver and skeletal muscle.

Its subcellular location is the cell membrane. It localises to the secreted. Its function is as follows. Potent inhibitor of the complement membrane attack complex (MAC) action, which protects self-cells from damage during complement activation. Acts by binding to the beta-haipins of C8 (C8A and C8B) components of the assembling MAC, forming an intermolecular beta-sheet that prevents incorporation of the multiple copies of C9 required for complete formation of the osmolytic pore. The sequence is that of CD59 glycoprotein from Sus scrofa (Pig).